Reading from the N-terminus, the 147-residue chain is Hemoglobin subunit delta (147 aa).

Residues 3-147 (NLTAAEKTQV…VANALAHKYH (145 aa)) enclose the Globin domain. Positions 64 and 93 each coordinate heme b.

Belongs to the globin family. Heterotetramer of two delta chains and two alpha chains. In terms of tissue distribution, red blood cells.

This Elephas maximus (Indian elephant) protein is Hemoglobin subunit delta (HBD).